A 402-amino-acid chain; its full sequence is F-box/kelch-repeat protein At4g39590 (402 aa).

The segment covering Met1–Asn14 has biased composition (low complexity). Residues Met1 to Ser37 are disordered. Over residues Thr27 to Ser37 the composition is skewed to polar residues. The F-box domain maps to Pro35 to Arg81. Kelch repeat units lie at residues Asn143 to Gly198, Lys199 to Ala246, Lys255 to Trp300, and Gln302 to Gly341.

The polypeptide is F-box/kelch-repeat protein At4g39590 (Arabidopsis thaliana (Mouse-ear cress)).